The primary structure comprises 418 residues: Putative heat shock protein HSP 90-alpha A4 (418 aa).

Asp-33, Lys-52, Phe-78, and Arg-204 together coordinate ATP. Disordered stretches follow at residues 255 to 289 and 383 to 418; these read EDLELPEDEEEKKKQEEGKQKTKQKKNQSLRTSAK and GLGTDEDDPTADDTSAAVTEEMPPLEGDDDTSRMEK. The segment covering 265-274 has biased composition (basic and acidic residues); it reads EKKKQEEGKQ.

The protein belongs to the heat shock protein 90 family. In terms of assembly, homodimer.

Its subcellular location is the cytoplasm. Functionally, putative molecular chaperone that may promote the maturation, structural maintenance and proper regulation of specific target proteins. This chain is Putative heat shock protein HSP 90-alpha A4 (HSP90AA4P), found in Homo sapiens (Human).